Reading from the N-terminus, the 630-residue chain is Coiled-coil domain-containing protein 120 (630 aa).

The segment at 31 to 70 is involved in CYTH2-binding; the sequence is RLRGLLDRQRTLQEALSLKLQELRKVCLQEAELTGQLPPE. Residues 109–173 adopt a coiled-coil conformation; that stretch reads ELALEALERE…LRDVRARLGL (65 aa). Composition is skewed to low complexity over residues 212–222 and 282–297; these read HSESSSLSESG and ASPT…SASS. Disordered regions lie at residues 212-435 and 457-534; these read HSES…GAPR and GGGT…NPLL. The segment covering 326-335 has biased composition (polar residues); sequence RQWSGSQDSQ. Residues Ser-358 and Ser-360 each carry the phosphoserine modification. A compositionally biased stretch (low complexity) spans 421 to 434; the sequence is ARPSSAAPASRGAP. Arg-435 carries the post-translational modification Omega-N-methylarginine.

Interacts with NIN and CEP170; leading to recruit them to centrosomes. Directly interacts with CYTH2; this interaction stabilizes CCDC120, possibly by preventing ubiquitination. In terms of processing, ubiquitinated; interaction with CYTH2 may prevent ubiquitination.

The protein resides in the cytoplasm. It is found in the cytoskeleton. The protein localises to the microtubule organizing center. Its subcellular location is the centrosome. It localises to the centriole. The protein resides in the cell projection. It is found in the neuron projection. The protein localises to the growth cone. Its subcellular location is the endosome. Functionally, centriolar protein required for centriole subdistal appendage assembly and microtubule anchoring in interphase cells. Together with CCDC68, cooperate with subdistal appendage components ODF2, NIN and CEP170 for hierarchical subdistal appendage assembly. Recruits NIN and CEP170 to centrosomes. Also required for neurite growth. Localizes CYTH2 to vesicles to allow its transport along neurites, and subsequent ARF6 activation and neurite growth. The sequence is that of Coiled-coil domain-containing protein 120 (CCDC120) from Homo sapiens (Human).